We begin with the raw amino-acid sequence, 200 residues long: 3-isopropylmalate dehydratase small subunit (200 aa).

It belongs to the LeuD family. LeuD type 1 subfamily. As to quaternary structure, heterodimer of LeuC and LeuD.

It carries out the reaction (2R,3S)-3-isopropylmalate = (2S)-2-isopropylmalate. The protein operates within amino-acid biosynthesis; L-leucine biosynthesis; L-leucine from 3-methyl-2-oxobutanoate: step 2/4. Catalyzes the isomerization between 2-isopropylmalate and 3-isopropylmalate, via the formation of 2-isopropylmaleate. This is 3-isopropylmalate dehydratase small subunit from Methylobacterium radiotolerans (strain ATCC 27329 / DSM 1819 / JCM 2831 / NBRC 15690 / NCIMB 10815 / 0-1).